A 128-amino-acid polypeptide reads, in one-letter code: Centrosomal protein 15 (128 aa).

It is found in the cell projection. It localises to the cilium. In terms of biological role, may play a role in ciliary assembly. This chain is Centrosomal protein 15 (CEP15), found in Bos taurus (Bovine).